The following is a 164-amino-acid chain: Nucleotide-binding protein Daro_3028 (164 aa).

This sequence belongs to the YajQ family.

In terms of biological role, nucleotide-binding protein. This chain is Nucleotide-binding protein Daro_3028, found in Dechloromonas aromatica (strain RCB).